The primary structure comprises 1259 residues: Clustered mitochondria protein homolog (1259 aa).

The span at 1–27 (MSQTNGNMEHSKETPQSQEVEQLTNGN) shows a compositional bias: polar residues. The segment at 1 to 38 (MSQTNGNMEHSKETPQSQEVEQLTNGNHPEEQQEEEEN) is disordered. The region spanning 324–568 (DITRSQESYL…RVTPLDVMWQ (245 aa)) is the Clu domain. Basic and acidic residues-rich tracts occupy residues 612-628 (AEAE…SKEQ) and 634-647 (TEEK…QERV). Disordered stretches follow at residues 612 to 647 (AEAE…QERV) and 881 to 908 (VVNG…PSRA). 3 TPR repeats span residues 982–1015 (AKLY…TERT), 1024–1057 (ILAY…WKII), and 1066–1099 (ITTM…CESL). Disordered regions lie at residues 1192–1215 (TKVQ…ANAS) and 1229–1259 (EGGD…KSSA).

This sequence belongs to the CLU family. May associate with the eukaryotic translation initiation factor 3 (eIF-3) complex.

The protein localises to the cytoplasm. In terms of biological role, mRNA-binding protein involved in proper cytoplasmic distribution of mitochondria. This Aspergillus clavatus (strain ATCC 1007 / CBS 513.65 / DSM 816 / NCTC 3887 / NRRL 1 / QM 1276 / 107) protein is Clustered mitochondria protein homolog.